The chain runs to 358 residues: 3-isopropylmalate dehydrogenase (358 aa).

77–90 (GPKWDNLPIDQRPE) contributes to the NAD(+) binding site. Substrate is bound by residues R98, R108, R137, and D221. The Mg(2+) site is built by D221, D245, and D249. 279–291 (GSAPDIAHLNIAN) lines the NAD(+) pocket.

It belongs to the isocitrate and isopropylmalate dehydrogenases family. LeuB type 1 subfamily. In terms of assembly, homodimer. It depends on Mg(2+) as a cofactor. Requires Mn(2+) as cofactor.

It is found in the cytoplasm. The catalysed reaction is (2R,3S)-3-isopropylmalate + NAD(+) = 4-methyl-2-oxopentanoate + CO2 + NADH. It participates in amino-acid biosynthesis; L-leucine biosynthesis; L-leucine from 3-methyl-2-oxobutanoate: step 3/4. In terms of biological role, catalyzes the oxidation of 3-carboxy-2-hydroxy-4-methylpentanoate (3-isopropylmalate) to 3-carboxy-4-methyl-2-oxopentanoate. The product decarboxylates to 4-methyl-2 oxopentanoate. This chain is 3-isopropylmalate dehydrogenase, found in Campylobacter jejuni (strain RM1221).